A 644-amino-acid polypeptide reads, in one-letter code: Macrolide export ATP-binding/permease protein MacB (644 aa).

Positions 4 to 242 (IECKNINRYF…SNVGRIQEKA (239 aa)) constitute an ABC transporter domain. Residue 40–47 (GQSGSGKS) participates in ATP binding. 4 helical membrane-spanning segments follow: residues 270–290 (LLTM…VALG), 524–544 (IALI…LVSV), 574–594 (LICV…SLVF), and 607–627 (AMSV…FGFM).

It belongs to the ABC transporter superfamily. Macrolide exporter (TC 3.A.1.122) family. As to quaternary structure, homodimer.

The protein resides in the cell inner membrane. Functionally, non-canonical ABC transporter that contains transmembrane domains (TMD), which form a pore in the inner membrane, and an ATP-binding domain (NBD), which is responsible for energy generation. Confers resistance against macrolides. This Neisseria meningitidis serogroup A / serotype 4A (strain DSM 15465 / Z2491) protein is Macrolide export ATP-binding/permease protein MacB.